Here is a 540-residue protein sequence, read N- to C-terminus: Chaperonin GroEL 1 (540 aa).

ATP is bound by residues 29-32, 86-90, G415, 479-481, and D495; these read TIGP, DGTTT, and NAA.

This sequence belongs to the chaperonin (HSP60) family. Forms a cylinder of 14 subunits composed of two heptameric rings stacked back-to-back. Interacts with the co-chaperonin GroES.

It localises to the cytoplasm. The catalysed reaction is ATP + H2O + a folded polypeptide = ADP + phosphate + an unfolded polypeptide.. Functionally, together with its co-chaperonin GroES, plays an essential role in assisting protein folding. The GroEL-GroES system forms a nano-cage that allows encapsulation of the non-native substrate proteins and provides a physical environment optimized to promote and accelerate protein folding. The chain is Chaperonin GroEL 1 from Streptomyces albus G.